Reading from the N-terminus, the 142-residue chain is Large ribosomal subunit protein uL11 (142 aa).

It belongs to the universal ribosomal protein uL11 family. As to quaternary structure, part of the ribosomal stalk of the 50S ribosomal subunit. Interacts with L10 and the large rRNA to form the base of the stalk. L10 forms an elongated spine to which L12 dimers bind in a sequential fashion forming a multimeric L10(L12)X complex. One or more lysine residues are methylated.

Forms part of the ribosomal stalk which helps the ribosome interact with GTP-bound translation factors. The protein is Large ribosomal subunit protein uL11 of Mesorhizobium japonicum (strain LMG 29417 / CECT 9101 / MAFF 303099) (Mesorhizobium loti (strain MAFF 303099)).